A 175-amino-acid chain; its full sequence is Urease accessory protein UreE (175 aa).

The interval 151 to 175 (GGAYGGSPSHAHRHSHVHSHSHETP) is disordered. Basic residues predominate over residues 160–169 (HAHRHSHVHS).

It belongs to the UreE family.

Its subcellular location is the cytoplasm. Its function is as follows. Involved in urease metallocenter assembly. Binds nickel. Probably functions as a nickel donor during metallocenter assembly. This Synechococcus sp. (strain WH7805) protein is Urease accessory protein UreE.